Consider the following 1606-residue polypeptide: Phosphatidylinositol 3,4,5-trisphosphate-dependent Rac exchanger 2 protein (1606 aa).

Residues 23–214 enclose the DH domain; sequence LRVCVLSELQ…KAVCSNINEA (192 aa). Residues 245 to 361 form the PH domain; the sequence is EMLMCGVLLK…WFEAILKERE (117 aa). 2 consecutive DEP domains span residues 390-464 and 491-566; these read CRQG…RFRY and SLFT…FFSD. PDZ domains are found at residues 592–671 and 677–754; these read KSLL…VLVS and TVKI…QDSI. Residues 1581-1606 are disordered; it reads GVRDRTPQSAPRLYKLCEPPPPAGEE.

In terms of assembly, interacts with RAC1. Isoform 1 is highly expressed in skeletal muscle, heart and placenta, absent from peripheral blood leukocytes. Isoform 2 is expressed in skeletal muscle, kidney, small intestine, and placenta. Isoform 3 is expressed in the heart.

In terms of biological role, functions as a RAC1 guanine nucleotide exchange factor (GEF), activating Rac proteins by exchanging bound GDP for free GTP. Its activity is synergistically activated by phosphatidylinositol 3,4,5-trisphosphate and the beta gamma subunits of heterotrimeric G protein. Mediates the activation of RAC1 in a PI3K-dependent manner. May be an important mediator of Rac signaling, acting directly downstream of both G protein-coupled receptors and phosphoinositide 3-kinase. This Homo sapiens (Human) protein is Phosphatidylinositol 3,4,5-trisphosphate-dependent Rac exchanger 2 protein.